Reading from the N-terminus, the 2179-residue chain is Probable inactive serine/threonine-protein kinase lvsG (2179 aa).

A disordered region spans residues 100 to 167 (DHDLNKNKNN…TSISLNDLNS (68 aa)). 2 stretches are compositionally biased toward low complexity: residues 106 to 121 (NKNN…NNSG) and 141 to 159 (LSPS…LSTS). The stretch at 216–256 (LYERSLKTSQQQQQQQQQQFKFQPNETLSLWEYFDEINSPP) is one WD 1 repeat. 9 disordered regions span residues 281-300 (LDNK…NSQS), 523-556 (DNDN…TVGW), 589-621 (DSMG…NSGK), 778-801 (KSLK…QPQF), 844-959 (NNHH…NKPS), 1033-1055 (AQQQ…SKQL), 1079-1153 (GISK…STTD), 1339-1362 (NHSN…KNGS), and 1785-1807 (TTTT…PNSL). The BEACH domain occupies 463–801 (YHQPLENQFE…QQQTQQQPQF (339 aa)). Residues 534-548 (NSSSSNNNNNNNNED) are compositionally biased toward low complexity. Over residues 590 to 602 (SMGGGIGSIGSTG) the composition is skewed to gly residues. Low complexity-rich tracts occupy residues 783-800 (QRQQ…QQPQ), 853-943 (NSNI…GVNN), 1033-1047 (AQQQ…QQQA), and 1084-1098 (TTNA…TNSN). A coiled-coil region spans residues 1021–1049 (LQQQLQQQQQQQAQQQQSQQQSQQQQANS). In terms of domain architecture, Protein kinase spans 1064–1400 (ESMIKKYSNG…VNELLSSSLF (337 aa)). Positions 1099–1122 (MGDSIGNNITSPPSPTSLKDSSSI) are enriched in polar residues. A compositionally biased stretch (low complexity) spans 1123–1134 (QQQQQQQQQQQQ). Positions 1135–1153 (NSESTRPITPPNVSNSTTD) are enriched in polar residues. 2 stretches are compositionally biased toward low complexity: residues 1339–1360 (NHSN…NNKN) and 1785–1801 (TTTT…NNNN). WD repeat units follow at residues 1864 to 1903 (EHNA…SLTT), 1906 to 1942 (QHMH…KVNV), 1945 to 1983 (EPTG…LTHE), 2007 to 2048 (SNSN…ILEQ), 2052 to 2089 (HHDS…PIIS), and 2149 to 2179 (PKQS…KICQ).

This sequence belongs to the protein kinase superfamily. Ser/Thr protein kinase family.

This Dictyostelium discoideum (Social amoeba) protein is Probable inactive serine/threonine-protein kinase lvsG (lvsG).